The following is a 98-amino-acid chain: DNA-binding protein Fis (98 aa).

The segment at residues 74–93 (QTRAATMLGINRGTLRKKLK) is a DNA-binding region (H-T-H motif).

This sequence belongs to the transcriptional regulatory Fis family. Homodimer.

Its function is as follows. Activates ribosomal RNA transcription. Plays a direct role in upstream activation of rRNA promoters. In Mannheimia haemolytica (Pasteurella haemolytica), this protein is DNA-binding protein Fis.